The primary structure comprises 206 residues: Uridine kinase (206 aa).

9–16 (GGSGSGKT) contacts ATP.

This sequence belongs to the uridine kinase family.

It localises to the cytoplasm. It carries out the reaction uridine + ATP = UMP + ADP + H(+). The enzyme catalyses cytidine + ATP = CMP + ADP + H(+). It functions in the pathway pyrimidine metabolism; CTP biosynthesis via salvage pathway; CTP from cytidine: step 1/3. It participates in pyrimidine metabolism; UMP biosynthesis via salvage pathway; UMP from uridine: step 1/1. This chain is Uridine kinase, found in Borrelia turicatae (strain 91E135).